A 225-amino-acid polypeptide reads, in one-letter code: Small ribosomal subunit protein uS3 (225 aa).

The region spanning 38 to 106 (IRKFIQSRFS…PVNLNIIEVK (69 aa)) is the KH type-2 domain.

The protein belongs to the universal ribosomal protein uS3 family. Part of the 30S ribosomal subunit. Forms a tight complex with proteins S10 and S14.

In terms of biological role, binds the lower part of the 30S subunit head. Binds mRNA in the 70S ribosome, positioning it for translation. This chain is Small ribosomal subunit protein uS3, found in Leptospira borgpetersenii serovar Hardjo-bovis (strain JB197).